A 281-amino-acid chain; its full sequence is 3-methyl-2-oxobutanoate hydroxymethyltransferase (281 aa).

Residues 1 to 20 are disordered; sequence MSEQTIYGANTPGGSGPRTK. Residues D62 and D101 each contribute to the Mg(2+) site. Residues 62 to 63, D101, and K131 contribute to the 3-methyl-2-oxobutanoate site; that span reads DS. Residue E133 participates in Mg(2+) binding. E199 serves as the catalytic Proton acceptor.

It belongs to the PanB family. Homodecamer; pentamer of dimers. Mg(2+) is required as a cofactor.

It is found in the cytoplasm. It catalyses the reaction 3-methyl-2-oxobutanoate + (6R)-5,10-methylene-5,6,7,8-tetrahydrofolate + H2O = 2-dehydropantoate + (6S)-5,6,7,8-tetrahydrofolate. Its pathway is cofactor biosynthesis; (R)-pantothenate biosynthesis; (R)-pantoate from 3-methyl-2-oxobutanoate: step 1/2. Catalyzes the reversible reaction in which hydroxymethyl group from 5,10-methylenetetrahydrofolate is transferred onto alpha-ketoisovalerate to form ketopantoate. This is 3-methyl-2-oxobutanoate hydroxymethyltransferase from Mycobacterium bovis (strain ATCC BAA-935 / AF2122/97).